We begin with the raw amino-acid sequence, 308 residues long: 4-hydroxy-3-methylbut-2-enyl diphosphate reductase (308 aa).

Cys12 provides a ligand contact to [4Fe-4S] cluster. Residues His41 and His74 each coordinate (2E)-4-hydroxy-3-methylbut-2-enyl diphosphate. His41 and His74 together coordinate dimethylallyl diphosphate. His41 and His74 together coordinate isopentenyl diphosphate. A [4Fe-4S] cluster-binding site is contributed by Cys96. His124 provides a ligand contact to (2E)-4-hydroxy-3-methylbut-2-enyl diphosphate. Position 124 (His124) interacts with dimethylallyl diphosphate. His124 contacts isopentenyl diphosphate. Glu126 acts as the Proton donor in catalysis. Residue Thr166 participates in (2E)-4-hydroxy-3-methylbut-2-enyl diphosphate binding. Cys196 contacts [4Fe-4S] cluster. The (2E)-4-hydroxy-3-methylbut-2-enyl diphosphate site is built by Ser224, Ser225, Asn226, and Ser268. Ser224, Ser225, Asn226, and Ser268 together coordinate dimethylallyl diphosphate. Isopentenyl diphosphate contacts are provided by Ser224, Ser225, Asn226, and Ser268.

It belongs to the IspH family. [4Fe-4S] cluster is required as a cofactor.

The enzyme catalyses isopentenyl diphosphate + 2 oxidized [2Fe-2S]-[ferredoxin] + H2O = (2E)-4-hydroxy-3-methylbut-2-enyl diphosphate + 2 reduced [2Fe-2S]-[ferredoxin] + 2 H(+). It catalyses the reaction dimethylallyl diphosphate + 2 oxidized [2Fe-2S]-[ferredoxin] + H2O = (2E)-4-hydroxy-3-methylbut-2-enyl diphosphate + 2 reduced [2Fe-2S]-[ferredoxin] + 2 H(+). It participates in isoprenoid biosynthesis; dimethylallyl diphosphate biosynthesis; dimethylallyl diphosphate from (2E)-4-hydroxy-3-methylbutenyl diphosphate: step 1/1. The protein operates within isoprenoid biosynthesis; isopentenyl diphosphate biosynthesis via DXP pathway; isopentenyl diphosphate from 1-deoxy-D-xylulose 5-phosphate: step 6/6. Functionally, catalyzes the conversion of 1-hydroxy-2-methyl-2-(E)-butenyl 4-diphosphate (HMBPP) into a mixture of isopentenyl diphosphate (IPP) and dimethylallyl diphosphate (DMAPP). Acts in the terminal step of the DOXP/MEP pathway for isoprenoid precursor biosynthesis. In Vesicomyosocius okutanii subsp. Calyptogena okutanii (strain HA), this protein is 4-hydroxy-3-methylbut-2-enyl diphosphate reductase.